The chain runs to 652 residues: Probable endo-1,3(4)-beta-glucanase AFUB_029980 (652 aa).

Positions 1–21 (MAPSSLLLSVGSLITSSLVSA) are cleaved as a signal peptide. Positions 36-289 (ESWQGESFIN…WAGNVFAEST (254 aa)) constitute a GH16 domain. Asparagine 64 is a glycosylation site (N-linked (GlcNAc...) asparagine). Catalysis depends on glutamate 145, which acts as the Nucleophile. Glutamate 150 acts as the Proton donor in catalysis. 2 N-linked (GlcNAc...) asparagine glycosylation sites follow: asparagine 200 and asparagine 208. A disordered region spans residues 379–423 (NTVATSAADHATPSSAETTTVPAATGAPSVSATEGGDSELESTST). The span at 390–410 (TPSSAETTTVPAATGAPSVSA) shows a compositional bias: polar residues. N-linked (GlcNAc...) asparagine glycosylation is present at asparagine 453. The interval 509–551 (SEIPTAPPEPVSQAVSTGSFDDSDTAQGDSEEQGSIASASVAP) is disordered. Positions 529 to 540 (DDSDTAQGDSEE) are enriched in acidic residues. A lipid anchor (GPI-anchor amidated asparagine) is attached at asparagine 630. Residues 631 to 652 (GANRMSVGLSGLIGVMFIAALA) constitute a propeptide, removed in mature form.

Belongs to the glycosyl hydrolase 16 family.

It is found in the cell membrane. The catalysed reaction is Endohydrolysis of (1-&gt;3)- or (1-&gt;4)-linkages in beta-D-glucans when the glucose residue whose reducing group is involved in the linkage to be hydrolyzed is itself substituted at C-3.. Functionally, mixed-linked glucanase involved in the degradation of complex natural cellulosic substrates. This chain is Probable endo-1,3(4)-beta-glucanase AFUB_029980, found in Aspergillus fumigatus (strain CBS 144.89 / FGSC A1163 / CEA10) (Neosartorya fumigata).